Consider the following 554-residue polypeptide: Rab GTPase-binding effector protein 2 (554 aa).

Disordered regions lie at residues 1–28 (MAAAPATLALDPQPQEKQKDASESSELS), 167–208 (IQRR…GPAA), and 371–395 (GLRAEQLPSSALQGSEQREDQDEAL). The segment covering 14-28 (PQEKQKDASESSELS) has biased composition (basic and acidic residues). Positions 15 to 173 (QEKQKDASES…IQEIQRRPRQ (159 aa)) form a coiled coil. Residues Ser176, Ser180, Ser187, and Ser191 each carry the phosphoserine modification. Residues 274-509 (DSQWEQLQVE…QAELETSEQV (236 aa)) adopt a coiled-coil conformation.

It belongs to the rabaptin family. In terms of assembly, heterodimer with RABGEF1. The dimer binds RAB5A that has been activated by GTP-binding. Interacts with SDCCAG8; this interaction is important for ciliogenesis regulation. Interacts with RAB4A; this interaction may mediate VEGFR2 cell surface expression.

It localises to the cytoplasm. Its subcellular location is the early endosome. The protein localises to the cytoskeleton. The protein resides in the microtubule organizing center. It is found in the centrosome. It localises to the cilium basal body. In terms of biological role, plays a role in membrane trafficking and in homotypic early endosome fusion. Participates in arteriogenesis by regulating vascular endothelial growth factor receptor 2/VEGFR2 cell surface expression and endosomal trafficking. By interacting with SDCCAG8, localizes to centrosomes and plays a critical role in ciliogenesis. This is Rab GTPase-binding effector protein 2 (Rabep2) from Mus musculus (Mouse).